The sequence spans 413 residues: Protein arginine N-methyltransferase 2 (413 aa).

Residues leucine 148–valine 187 form a disordered region. The segment covering alanine 162–serine 182 has biased composition (low complexity). The RMT2 domain occupies threonine 192–glutamine 413. Residues tyrosine 199, methionine 229, phenylalanine 252 to isoleucine 257, glutamate 273 to histidine 275, tryptophan 300 to glutamine 301, and aspartate 321 each bind S-adenosyl-L-methionine.

It belongs to the class I-like SAM-binding methyltransferase superfamily. RMT2 methyltransferase family. In terms of assembly, monomer.

It localises to the cytoplasm. The protein localises to the nucleus. Functionally, S-adenosyl-L-methionine-dependent protein-arginine N-methyltransferase that methylates the delta-nitrogen atom of arginine residues to form N5-methylarginine (type IV) in target proteins. Monomethylates ribosomal protein L12. This chain is Protein arginine N-methyltransferase 2, found in Eremothecium gossypii (strain ATCC 10895 / CBS 109.51 / FGSC 9923 / NRRL Y-1056) (Yeast).